The primary structure comprises 480 residues: Iroquois-class homeodomain protein IRX-1 (480 aa).

Residues 125-188 (YGDPGRPKNA…ANARRRLKKE (64 aa)) constitute a DNA-binding region (homeobox; TALE-type). Disordered stretches follow at residues 190–268 (KVTW…QGSP), 280–354 (SPLG…PLQH), and 401–480 (PHGP…LPSA). Residues 210 to 228 (TEGDPEKAEDDEEIDLESI) show a composition bias toward acidic residues. The segment covering 229–239 (DIDKIDEHDGD) has biased composition (basic and acidic residues). Serine 241 is subject to Phosphoserine. 2 stretches are compositionally biased toward low complexity: residues 252-262 (PHAPAAPSALA) and 340-351 (HPGAHGPSAGAP). Pro residues predominate over residues 404–417 (PHLPAPPPPQPPVA).

Belongs to the TALE/IRO homeobox family.

Its subcellular location is the nucleus. The polypeptide is Iroquois-class homeodomain protein IRX-1 (IRX1) (Homo sapiens (Human)).